We begin with the raw amino-acid sequence, 237 residues long: Leucyl/phenylalanyl-tRNA--protein transferase (237 aa).

Belongs to the L/F-transferase family.

It is found in the cytoplasm. The catalysed reaction is N-terminal L-lysyl-[protein] + L-leucyl-tRNA(Leu) = N-terminal L-leucyl-L-lysyl-[protein] + tRNA(Leu) + H(+). It catalyses the reaction N-terminal L-arginyl-[protein] + L-leucyl-tRNA(Leu) = N-terminal L-leucyl-L-arginyl-[protein] + tRNA(Leu) + H(+). It carries out the reaction L-phenylalanyl-tRNA(Phe) + an N-terminal L-alpha-aminoacyl-[protein] = an N-terminal L-phenylalanyl-L-alpha-aminoacyl-[protein] + tRNA(Phe). In terms of biological role, functions in the N-end rule pathway of protein degradation where it conjugates Leu, Phe and, less efficiently, Met from aminoacyl-tRNAs to the N-termini of proteins containing an N-terminal arginine or lysine. This is Leucyl/phenylalanyl-tRNA--protein transferase from Aromatoleum aromaticum (strain DSM 19018 / LMG 30748 / EbN1) (Azoarcus sp. (strain EbN1)).